We begin with the raw amino-acid sequence, 194 residues long: Peptidyl-tRNA hydrolase (194 aa).

Tyr-17 lines the tRNA pocket. The Proton acceptor role is filled by His-22. Residues Tyr-68, Asn-70, and Asn-116 each coordinate tRNA.

It belongs to the PTH family. Monomer.

The protein localises to the cytoplasm. The catalysed reaction is an N-acyl-L-alpha-aminoacyl-tRNA + H2O = an N-acyl-L-amino acid + a tRNA + H(+). Functionally, hydrolyzes ribosome-free peptidyl-tRNAs (with 1 or more amino acids incorporated), which drop off the ribosome during protein synthesis, or as a result of ribosome stalling. Catalyzes the release of premature peptidyl moieties from peptidyl-tRNA molecules trapped in stalled 50S ribosomal subunits, and thus maintains levels of free tRNAs and 50S ribosomes. This chain is Peptidyl-tRNA hydrolase, found in Pseudomonas putida (strain ATCC 700007 / DSM 6899 / JCM 31910 / BCRC 17059 / LMG 24140 / F1).